Here is a 217-residue protein sequence, read N- to C-terminus: 3-isopropylmalate dehydratase small subunit (217 aa).

This sequence belongs to the LeuD family. LeuD type 1 subfamily. In terms of assembly, heterodimer of LeuC and LeuD.

It carries out the reaction (2R,3S)-3-isopropylmalate = (2S)-2-isopropylmalate. The protein operates within amino-acid biosynthesis; L-leucine biosynthesis; L-leucine from 3-methyl-2-oxobutanoate: step 2/4. In terms of biological role, catalyzes the isomerization between 2-isopropylmalate and 3-isopropylmalate, via the formation of 2-isopropylmaleate. This is 3-isopropylmalate dehydratase small subunit from Delftia acidovorans (strain DSM 14801 / SPH-1).